Consider the following 61-residue polypeptide: Probradykinin-1 (61 aa).

The N-terminal stretch at 1-22 is a signal peptide; it reads MSFLKKSLFLVLFLGLVSFSIC. A propeptide spanning residues 23 to 48 is cleaved from the precursor; the sequence is EEEKRETEEEENKDETEEQSEEKKRF. The tract at residues 24–61 is disordered; sequence EEKRETEEEENKDETEEQSEEKKRFEPVPPGFTPFRLT. Positions 30–42 are enriched in acidic residues; that stretch reads EEEENKDETEEQS.

Belongs to the frog skin active peptide (FSAP) family. Bradykinin-related peptide subfamily. In terms of tissue distribution, expressed by the skin glands.

The protein resides in the secreted. In terms of biological role, may produce in vitro relaxation of rat arterial smooth muscle and constriction of intestinal smooth muscle. May target bradykinin receptors (BDKRB). The protein is Probradykinin-1 of Pithecopus azureus (Orange-legged monkey tree frog).